The primary structure comprises 601 residues: MAALTPRKRKQDSLKCDSLLHFTENLFPSPNKKHCFYQNSDKNEENLHCSQQEHFVLSALKTTEINRLPSANQGSPFKSALSTVSFYNQNKWYLNPLERKLIKESRSTCLKTNDEDKSFPIVTEKMQGKPVCSKKNNKKPQKSLTAKYQPKYRHIKPVSRNSRNSKQNRVIYKPIVEKENNCHSAENNSNAPRVLSQKIKPQVTLQGGAAFFVRKKSSLRKSSLENEPSLGRTQKSKSEVIEDSDVETVSEKKTFATRQVPKCLVLEEKLKIGLLSASSKNKEKLIKDSSDDRVSSKEHKVDKNEAFSSEDSLGENKTISPKSTVYPIFSASSVNSKRSLGEEQFSVGSVNFMKQTNIQKNTNTRDTSKKTKDQLIIDAGQKHFGATVCKSCGMIYTASNPEDEMQHVQHHHRFLEGIKYVGWKKERVVAEFWDGKIVLVLPHDPSFAIKKVEDVQELVDNELGFQQVVPKCPNKIKTFLFISDEKRVVGCLIAEPIKQAFRVLSEPIGPESPSSTECPRAWQCSDVPEPAVCGISRIWVFRLKRRKRIARRLVDTLRNCFMFGCFLSTDEIAFSDPTPDGKLFATKYCNTPNFLVYNFNS.

Phosphoserine is present on residues Ser-29, Ser-75, Ser-223, and Ser-244. Positions Ser-222 to Asp-243 are disordered. The segment covering Lys-282–Glu-305 has biased composition (basic and acidic residues). The interval Lys-282 to Glu-315 is disordered. The span at Ala-306–Glu-315 shows a compositional bias: polar residues. Residue Ser-312 is modified to Phosphoserine. The segment at Thr-387 to His-411 adopts a CCHH-type zinc-finger fold. At Ser-512 the chain carries Phosphoserine.

This sequence belongs to the acetyltransferase family. ECO subfamily. In terms of tissue distribution, widely expressed in fetal tissues. In adult, it is expressed in thymus, placenta and small intestine.

The protein localises to the nucleus. It localises to the chromosome. The enzyme catalyses L-lysyl-[protein] + acetyl-CoA = N(6)-acetyl-L-lysyl-[protein] + CoA + H(+). Its function is as follows. Acetyltransferase required for the establishment of sister chromatid cohesion. Couples the processes of cohesion and DNA replication to ensure that only sister chromatids become paired together. In contrast to the structural cohesins, the deposition and establishment factors are required only during the S phase. Acetylates the cohesin component SMC3. This Homo sapiens (Human) protein is N-acetyltransferase ESCO2.